Consider the following 398-residue polypeptide: Inner membrane protein YjgN (398 aa).

Topologically, residues 1–24 are cytoplasmic; sequence MAQVINEMDVPSHSFVFHGTGERY. Residues 25 to 45 traverse the membrane as a helical segment; it reads FLICVVNVLLTIITLGIYLPW. The Periplasmic portion of the chain corresponds to 46-73; it reads ALMKCKRYLYANMEVNGQRFSYGITGGN. A helical membrane pass occupies residues 74–94; sequence VFFSCLVFVFFYFAILMTVSA. Residue D95 is a topological domain, cytoplasmic. A helical transmembrane segment spans residues 96 to 116; the sequence is MPLIGCVLTLSLLVLLIFMAA. The Periplasmic portion of the chain corresponds to 117–142; the sequence is KGLRYQALMTSLNGVRFSFNCSMKGV. The helical transmembrane segment at 143 to 163 threads the bilayer; sequence WWVTFFLPILMAIGMGTVFFI. Residues 164–175 lie on the Cytoplasmic side of the membrane; the sequence is STKMLHANSSSS. Residues 176–196 traverse the membrane as a helical segment; sequence VIVSVVLMAIVGIVSIGIFNG. Topologically, residues 197 to 228 are periplasmic; the sequence is TLYSLVMSFLWSNTSFGIHRFKVKLDTAYCIK. A helical membrane pass occupies residues 229–249; that stretch reads YAILAFLALLPFLAVAGYIIF. Residues 250 to 278 lie on the Cytoplasmic side of the membrane; the sequence is DQILNAYDSSVYANDDIENLQQFMEMQRK. A helical transmembrane segment spans residues 279-299; sequence MIIAQLIYYFGIAVSTSYLTV. Topologically, residues 300–333 are periplasmic; sequence SLRNHFMSNLSLNDGRIRFRSTLTYHGMLYRMCA. The chain crosses the membrane as a helical span at residues 334 to 354; the sequence is LVVISGITGGLAYPLLKIWMI. The Cytoplasmic portion of the chain corresponds to 355–398; the sequence is DWQAKNTYLLGDLDDLPLINKEEQPDKGFLASISRGIMPSLPFL.

It is found in the cell inner membrane. The sequence is that of Inner membrane protein YjgN (yjgN) from Escherichia coli O157:H7.